A 190-amino-acid chain; its full sequence is Guanylate kinase (190 aa).

The region spanning 8–188 is the Guanylate kinase-like domain; the sequence is GRLVILAGPS…AVKAIEDVLL (181 aa). 15–22 contributes to the ATP binding site; sequence GPSAVGKS.

This sequence belongs to the guanylate kinase family.

Its subcellular location is the cytoplasm. The catalysed reaction is GMP + ATP = GDP + ADP. Functionally, essential for recycling GMP and indirectly, cGMP. The polypeptide is Guanylate kinase (Corynebacterium glutamicum (strain ATCC 13032 / DSM 20300 / JCM 1318 / BCRC 11384 / CCUG 27702 / LMG 3730 / NBRC 12168 / NCIMB 10025 / NRRL B-2784 / 534)).